A 660-amino-acid polypeptide reads, in one-letter code: Bifunctional polymyxin resistance protein ArnA (660 aa).

A formyltransferase ArnAFT region spans residues 1–304 (MKTVVFAYHD…TLGLVQGSRL (304 aa)). 86-88 (HLI) provides a ligand contact to (6R)-10-formyltetrahydrofolate. Histidine 104 acts as the Proton donor; for formyltransferase activity in catalysis. Residues arginine 114 and 136 to 140 (VKRAD) contribute to the (6R)-10-formyltetrahydrofolate site. The segment at 314–660 (RRTRVLILGV…RTVDLTDKPS (347 aa)) is dehydrogenase ArnADH. Residues aspartate 347 and 368–369 (DI) each bind NAD(+). Residues alanine 393, tyrosine 398, and 432-433 (TS) each bind UDP-alpha-D-glucuronate. Residue glutamate 434 is the Proton acceptor; for decarboxylase activity of the active site. Residues arginine 460, asparagine 492, 526–535 (KLIDGGKQKR), and tyrosine 613 each bind UDP-alpha-D-glucuronate. Residue arginine 619 is the Proton donor; for decarboxylase activity of the active site.

This sequence in the N-terminal section; belongs to the Fmt family. UDP-L-Ara4N formyltransferase subfamily. The protein in the C-terminal section; belongs to the NAD(P)-dependent epimerase/dehydratase family. UDP-glucuronic acid decarboxylase subfamily. As to quaternary structure, homohexamer, formed by a dimer of trimers.

It catalyses the reaction UDP-alpha-D-glucuronate + NAD(+) = UDP-beta-L-threo-pentopyranos-4-ulose + CO2 + NADH. The enzyme catalyses UDP-4-amino-4-deoxy-beta-L-arabinose + (6R)-10-formyltetrahydrofolate = UDP-4-deoxy-4-formamido-beta-L-arabinose + (6S)-5,6,7,8-tetrahydrofolate + H(+). It functions in the pathway nucleotide-sugar biosynthesis; UDP-4-deoxy-4-formamido-beta-L-arabinose biosynthesis; UDP-4-deoxy-4-formamido-beta-L-arabinose from UDP-alpha-D-glucuronate: step 1/3. It participates in nucleotide-sugar biosynthesis; UDP-4-deoxy-4-formamido-beta-L-arabinose biosynthesis; UDP-4-deoxy-4-formamido-beta-L-arabinose from UDP-alpha-D-glucuronate: step 3/3. Its pathway is bacterial outer membrane biogenesis; lipopolysaccharide biosynthesis. In terms of biological role, bifunctional enzyme that catalyzes the oxidative decarboxylation of UDP-glucuronic acid (UDP-GlcUA) to UDP-4-keto-arabinose (UDP-Ara4O) and the addition of a formyl group to UDP-4-amino-4-deoxy-L-arabinose (UDP-L-Ara4N) to form UDP-L-4-formamido-arabinose (UDP-L-Ara4FN). The modified arabinose is attached to lipid A and is required for resistance to polymyxin and cationic antimicrobial peptides. The polypeptide is Bifunctional polymyxin resistance protein ArnA (Escherichia coli O6:H1 (strain CFT073 / ATCC 700928 / UPEC)).